The following is a 1369-amino-acid chain: Serine/threonine-protein kinase SIK3 (1369 aa).

A disordered region spans residues 26 to 55 (LLPPPAAGPPAAPAAVPPAAVPARPTAPAS). Positions 27–45 (LPPPAAGPPAAPAAVPPAA) are enriched in pro residues. Low complexity predominate over residues 46–55 (VPARPTAPAS). Residues 66–317 (YEIDRTIGKG…MEQICRHKWM (252 aa)) enclose the Protein kinase domain. Thr-71 is modified (phosphothreonine). Residues 72–80 (IGKGNFAVV) and Lys-95 contribute to the ATP site. Asp-188 (proton acceptor) is an active-site residue. Residue Thr-221 is modified to Phosphothreonine. The UBA domain occupies 344–384 (PLNDDVLLAMEDMGLDKERTLQSLRSDAYDHYSAIYSLLCD). Residue Thr-469 is modified to Phosphothreonine. Phosphoserine is present on residues Ser-551, Ser-591, Ser-592, Ser-674, and Ser-695. Positions 775-821 (IQPSSPPPNHPSNHLFRQPSNSPPPVSSAMITSHGATSPSQFQGLPS) are disordered. Polar residues predominate over residues 803–818 (AMITSHGATSPSQFQG). At Ser-914 the chain carries Phosphoserine. The interval 942–993 (LFSDQSRGSPSSYSPSTGVGFPPTQALKVPPLDQFPTFPPSAQQQPPHYTTS) is disordered. Residues 944–957 (SDQSRGSPSSYSPS) are compositionally biased toward low complexity. Residues 981-993 (PSAQQQPPHYTTS) are compositionally biased toward polar residues. Position 1026 is a phosphoserine (Ser-1026). At Arg-1034 the chain carries Omega-N-methylarginine. The interval 1314-1338 (DEEDEECGVSLGHEHPGLGDGSQHL) is disordered.

Belongs to the protein kinase superfamily. CAMK Ser/Thr protein kinase family. SNF1 subfamily. Binds to and is activated by YWHAZ when phosphorylated on Thr-221. Interacts with 14-3-3 proteins. Interacts with HDAC4; this interaction leads to HDAC4 retention in the cytoplasm. Interacts with DEPTOR, MLST8/GbetaL, RICTOR and RPTOR. It depends on Mg(2+) as a cofactor. Phosphorylated at Thr-221 by STK11/LKB1 in complex with STE20-related adapter-alpha (STRADA) pseudo kinase and CAB39. In terms of tissue distribution, expressed in hypertrophic chondrocytes in the growth plate.

It localises to the cytoplasm. It catalyses the reaction L-seryl-[protein] + ATP = O-phospho-L-seryl-[protein] + ADP + H(+). The enzyme catalyses L-threonyl-[protein] + ATP = O-phospho-L-threonyl-[protein] + ADP + H(+). Its activity is regulated as follows. Activated by phosphorylation on Thr-221. Functionally, positive regulator of mTOR signaling that functions by triggering the degradation of DEPTOR, an mTOR inhibitor. Required for chondrocyte hypertrophy during skeletogenesis. Negatively regulates cAMP signaling pathway possibly by acting on CRTC2/TORC2 and CRTC3/TORC3. Prevents HDAC4 translocation to the nucleus. The sequence is that of Serine/threonine-protein kinase SIK3 (Sik3) from Mus musculus (Mouse).